An 85-amino-acid chain; its full sequence is UPF0386 protein RL2079 (85 aa).

Belongs to the UPF0386 family.

In Rhizobium johnstonii (strain DSM 114642 / LMG 32736 / 3841) (Rhizobium leguminosarum bv. viciae), this protein is UPF0386 protein RL2079.